Consider the following 267-residue polypeptide: Putative carbamate hydrolase RutD (267 aa).

The 117-residue stretch at 23-139 folds into the AB hydrolase-1 domain; sequence VVLLSSGLGG…IQRCFDTRIH (117 aa).

It belongs to the AB hydrolase superfamily. Hydrolase RutD family.

The catalysed reaction is carbamate + 2 H(+) = NH4(+) + CO2. In terms of biological role, involved in pyrimidine catabolism. May facilitate the hydrolysis of carbamate, a reaction that can also occur spontaneously. The sequence is that of Putative carbamate hydrolase RutD from Caulobacter segnis (strain ATCC 21756 / DSM 7131 / JCM 7823 / NBRC 15250 / LMG 17158 / TK0059) (Mycoplana segnis).